The primary structure comprises 466 residues: Carboxy-terminal processing protease CtpA (466 aa).

Positions 1–36 (MKRQLKLFFIVLITAVVASALTLFITGNSSILGQKS) are cleaved as a signal peptide. Residues 96–174 (DETISASFEG…TKVKLELNRA (79 aa)) form the PDZ domain. Catalysis depends on charge relay system residues Ser297, Glu308, and Lys322.

The protein belongs to the peptidase S41A family.

The catalysed reaction is The enzyme shows specific recognition of a C-terminal tripeptide, Xaa-Yaa-Zaa, in which Xaa is preferably Ala or Leu, Yaa is preferably Ala or Tyr, and Zaa is preferably Ala, but then cleaves at a variable distance from the C-terminus. A typical cleavage is -Ala-Ala-|-Arg-Ala-Ala-Lys-Glu-Asn-Tyr-Ala-Leu-Ala-Ala.. The protein is Carboxy-terminal processing protease CtpA (ctpA) of Bacillus subtilis (strain 168).